A 721-amino-acid chain; its full sequence is Protein quick-to-court (721 aa).

5 disordered regions span residues 1-42, 143-210, 360-379, 393-428, and 441-471; these read MMTS…RIPH, VGNS…ASVA, SSPE…EAEL, DEGN…MQSS, and SSVH…CGAG. The span at 17-31 shows a compositional bias: basic and acidic residues; the sequence is QVQREKDNDSAEDSH. A compositionally biased stretch (low complexity) spans 161-201; sequence NGGSDISSSGTSSSSSNNKESSPRTTRTPRTPQTPQTPQTP. Basic and acidic residues predominate over residues 362-379; the sequence is PEERSASSDAVTVREAEL. The segment covering 406 to 420 has biased composition (low complexity); it reads RQQQQQANHSLQAMQ. Residues 441-454 show a composition bias toward polar residues; sequence SSVHSKDSQTQSEA. Residues 511 to 569 adopt a coiled-coil conformation; the sequence is KRSHNDKVEALLQKLAECNTRYSDMVPDYEQAKQRIRELEKQLEDLQRKLIEHEEKQNK. Residues 668–716 enclose the GRIP domain; that stretch reads HVDPEVTLQFLKSAIFYFLTDKENSQGHLQAIESILEFTDAEKQKISAA.

As to expression, expressed in the third antennal segment and the maxillary palp, with increased expression near the cuticle of both olfactory organs. Also detected in the second antenna segment. In the brain, expressed in the central nervous system, with high levels of expression in the visual system including the retina and optic lobe, and uniform expression in the cortex. Detected in the thorax and abdomen, with increased expression in the ventral ganglion. In males, detected in the reproductive tract including the ejaculatory bulb and testis.

In adult males, modulates sexual behavior by playing a role in sex discrimination and maintaining normal levels of sexual activity towards both males and females. The polypeptide is Protein quick-to-court (Drosophila melanogaster (Fruit fly)).